The sequence spans 500 residues: Cytochrome P450 monooxygenase astJ (500 aa).

C440 contacts heme.

It belongs to the cytochrome P450 family. Heme is required as a cofactor.

It functions in the pathway secondary metabolite biosynthesis; terpenoid biosynthesis. Its function is as follows. Cytochrome P450 monooxygenase; part of the gene cluster that mediates the biosynthesis of astellolides, drimane-type sesquiterpene esters that show antimicrobial, anti-inflammatory, and anti-tumor activities. The first step in astellolide biosynthesis is performed by the sesquiterpene cyclase astC that catalyzes the formation of drimanyl pyrophosphate from farnesyl pyrophosphate. Drimanyl pyrophosphate is then dephosphorylated by the sesquiterpene phosphatase astI to produce drimanyl monophosphate which is further dephosphorylated to drim-8-ene-11-ol by atsK. Drim-8-ene-11-ol is converted to confertifolin, probably by the cytochrome P450 monooxygenase astD and/or the dehydrogenase astE. The cytochrome P450 monooxygenases astB, astF and astJ then hydroxylate confertifolin at C6, C14, or C15 to form trihydroxy confertifolin. The nonribosomal peptide synthetase astA catalyzes ester bond formation between trihydroxy contifolin and benzoic acid (BA) or 4-hydroxy benzoic acid (4HBA), leading to the formation of dideacetyl astellolides A and B, respectively. Finally, the O-acetyltransferase astG converts dideacetyl astellolides A and B into deacetyl astellolides A and B. This is Cytochrome P450 monooxygenase astJ from Aspergillus oryzae (strain ATCC 42149 / RIB 40) (Yellow koji mold).